A 151-amino-acid chain; its full sequence is Macrodomain Ter protein (151 aa).

The protein belongs to the MatP family. Homodimer.

The protein localises to the cytoplasm. Its function is as follows. Required for spatial organization of the terminus region of the chromosome (Ter macrodomain) during the cell cycle. Prevents early segregation of duplicated Ter macrodomains during cell division. Binds specifically to matS, which is a 13 bp signature motif repeated within the Ter macrodomain. In Vibrio atlanticus (strain LGP32) (Vibrio splendidus (strain Mel32)), this protein is Macrodomain Ter protein.